A 324-amino-acid chain; its full sequence is Glyoxylate/hydroxypyruvate reductase B (324 aa).

Catalysis depends on residues Arg237 and Glu266. His285 (proton donor) is an active-site residue.

This sequence belongs to the D-isomer specific 2-hydroxyacid dehydrogenase family. GhrB subfamily. Homodimer.

Its subcellular location is the cytoplasm. It carries out the reaction glycolate + NADP(+) = glyoxylate + NADPH + H(+). The catalysed reaction is (R)-glycerate + NAD(+) = 3-hydroxypyruvate + NADH + H(+). The enzyme catalyses (R)-glycerate + NADP(+) = 3-hydroxypyruvate + NADPH + H(+). In terms of biological role, catalyzes the NADPH-dependent reduction of glyoxylate and hydroxypyruvate into glycolate and glycerate, respectively. The protein is Glyoxylate/hydroxypyruvate reductase B of Shigella dysenteriae serotype 1 (strain Sd197).